A 387-amino-acid polypeptide reads, in one-letter code: Colicin-N (387 aa).

Over residues 1–11 (MGSNGADNAHN) the composition is skewed to polar residues. Residues 1 to 106 (MGSNGADNAH…ITITPDNSKP (106 aa)) form a disordered region. The segment covering 14-30 (FGGGKNPGIGNTSGAGS) has biased composition (gly residues). The span at 31–48 (NGSASSNRGNSNGWSWSN) shows a compositional bias: low complexity. Residues 78–87 (GNSGNRGNNG) show a composition bias toward gly residues. 2 helical membrane-spanning segments follow: residues 325–345 (IIGGVVAGVAISLFGAVLSFL) and 350–370 (LAVTALGVIGIMTISYLSSFI).

It belongs to the channel forming colicin family.

It localises to the cell membrane. This colicin is a channel-forming colicin. This class of transmembrane toxins depolarize the cytoplasmic membrane, leading to dissipation of cellular energy. Its function is as follows. Colicins are polypeptide toxins produced by and active against E.coli and closely related bacteria. This is Colicin-N (cna) from Escherichia coli.